A 61-amino-acid polypeptide reads, in one-letter code: Large ribosomal subunit protein uL30 (61 aa).

This sequence belongs to the universal ribosomal protein uL30 family. As to quaternary structure, part of the 50S ribosomal subunit.

The polypeptide is Large ribosomal subunit protein uL30 (Treponema denticola (strain ATCC 35405 / DSM 14222 / CIP 103919 / JCM 8153 / KCTC 15104)).